The chain runs to 283 residues: Digeranylgeranylglyceryl phosphate synthase (283 aa).

The next 8 helical transmembrane spans lie at 21 to 41 (ITAS…EIDI), 45 to 65 (LLVF…NDIF), 97 to 117 (LILG…IAVI), 135 to 155 (IGNF…GVAG), 158 to 178 (VMPV…REIV), 204 to 224 (LYFA…PYIL), 226 to 246 (IFGI…IYAM), and 261 to 281 (VSKF…VGAI).

This sequence belongs to the UbiA prenyltransferase family. DGGGP synthase subfamily. Requires Mg(2+) as cofactor.

It localises to the cell membrane. The enzyme catalyses sn-3-O-(geranylgeranyl)glycerol 1-phosphate + (2E,6E,10E)-geranylgeranyl diphosphate = 2,3-bis-O-(geranylgeranyl)-sn-glycerol 1-phosphate + diphosphate. It participates in membrane lipid metabolism; glycerophospholipid metabolism. In terms of biological role, prenyltransferase that catalyzes the transfer of the geranylgeranyl moiety of geranylgeranyl diphosphate (GGPP) to the C2 hydroxyl of (S)-3-O-geranylgeranylglyceryl phosphate (GGGP). This reaction is the second ether-bond-formation step in the biosynthesis of archaeal membrane lipids. The sequence is that of Digeranylgeranylglyceryl phosphate synthase from Methanocaldococcus jannaschii (strain ATCC 43067 / DSM 2661 / JAL-1 / JCM 10045 / NBRC 100440) (Methanococcus jannaschii).